We begin with the raw amino-acid sequence, 500 residues long: MTEHVQDENKLIAERRAKLEHIRTNCPANAHPNTWQRSHKAAELQAQYGEQTKEALEELAFQTSIAGRVMAKRGPFLVIQDVSGRIQAYAGKPVQGDLKERYQGLDIGDIIGVKGQLHLSGKGDLYVNMEEYQLLTKALRPLPEKFHGLTDQETRYRQRYVDLIVNEDSRNAFIMRSKVVAAIRNFMVKKEFMEVETPMMHVIPGGASARPFVTHHNALDMAMYLRIAPELYLKRLVVGGFERVFEINRNFRNEGLSPRHNPEFTMMEFYMAYADYKDLMDLTEEMLGSIAQELLGSTSMPYGEETVEFGGAYARLSMLEAIQKYNPDNATIQAMTYEQVKDVEFMRDLASSLGIKLEKFWTCGQLLEEIFGETAETKLMQPTFITGYPADISPLARRNDNNDFITDRFEFFIGGREVANGFSELNDAEDQDNRFKAQVDAKDAGDDEAMFYDADYITALEHGLPPTAGQGIGIDRLVMLFTNTHTIRDVILFPAMRPQA.

2 residues coordinate Mg(2+): Glu410 and Glu417.

The protein belongs to the class-II aminoacyl-tRNA synthetase family. In terms of assembly, homodimer. Requires Mg(2+) as cofactor.

The protein localises to the cytoplasm. It catalyses the reaction tRNA(Lys) + L-lysine + ATP = L-lysyl-tRNA(Lys) + AMP + diphosphate. The protein is Lysine--tRNA ligase of Shewanella frigidimarina (strain NCIMB 400).